A 121-amino-acid polypeptide reads, in one-letter code: Ribonuclease P protein component (121 aa).

It belongs to the RnpA family. As to quaternary structure, consists of a catalytic RNA component (M1 or rnpB) and a protein subunit.

The catalysed reaction is Endonucleolytic cleavage of RNA, removing 5'-extranucleotides from tRNA precursor.. RNaseP catalyzes the removal of the 5'-leader sequence from pre-tRNA to produce the mature 5'-terminus. It can also cleave other RNA substrates such as 4.5S RNA. The protein component plays an auxiliary but essential role in vivo by binding to the 5'-leader sequence and broadening the substrate specificity of the ribozyme. This chain is Ribonuclease P protein component, found in Desulfosudis oleivorans (strain DSM 6200 / JCM 39069 / Hxd3) (Desulfococcus oleovorans).